The following is a 276-amino-acid chain: Chymotrypsin (276 aa).

Positions 1 to 16 (MKVALVVLALFGVSLA) are cleaved as a signal peptide. The propeptide at 17-45 (ASIDNIEIPPSKNIYVEPINQPEVDPSLE) is activation peptide. In terms of domain architecture, Peptidase S1 spans 46–272 (IVNGQEVVPH…YLNWLQTHSE (227 aa)). Cysteine 74 and cysteine 90 are joined by a disulfide. Active-site charge relay system residues include histidine 89 and aspartate 135. 2 N-linked (GlcNAc...) asparagine glycosylation sites follow: asparagine 144 and asparagine 193. Cystine bridges form between cysteine 202-cysteine 215 and cysteine 225-cysteine 250. The active-site Charge relay system is serine 229.

The protein belongs to the peptidase S1 family. Expressed in larval carcasses and gut, and adult gut.

Its subcellular location is the secreted. It localises to the extracellular space. It carries out the reaction Preferential cleavage: Tyr-|-Xaa, Trp-|-Xaa, Phe-|-Xaa, Leu-|-Xaa.. Serine protease with chymotryptic and collagenolytic activities. This is Chymotrypsin from Phaedon cochleariae (Mustard beetle).